The sequence spans 268 residues: MHPKTGRAFRSPVEPGSGWPGDPATPQTPVAADAAQVSALAGGAGSICELNALISVCRACPRLVSWREEVAVVKRRAFADQPYWGRPVPGWGSKRPRLLILGLAPAAHGANRTGRMFTGDRSGDQLYAALHRAGLVNSPVSVDAADGLRANRIRITAPVRCAPPGNSPTPAERLTCSPWLNAEWRLVSDHIRAIVALGGFAWQVALRLAGASGTPKPRFGHGVVTELGAGVRLLGCYHPSQQNMFTGRLTPTMLDDIFREAKKLAGIE.

Positions 1–29 (MHPKTGRAFRSPVEPGSGWPGDPATPQTP) are disordered. Residues Cys57, Cys60, Cys161, and Cys176 each contribute to the [4Fe-4S] cluster site.

The protein belongs to the uracil-DNA glycosylase (UDG) superfamily. Type 5 (UDGb) family.

Functionally, DNA glycosylase with broad substrate specificity. This Mycobacterium bovis (strain ATCC BAA-935 / AF2122/97) protein is Type-5 uracil-DNA glycosylase.